Reading from the N-terminus, the 305-residue chain is NADH-cytochrome b5 reductase 1 (305 aa).

The helical transmembrane segment at 8-28 (VLLASLGVGLVTLLGLAVGSY) threads the bilayer. The FAD-binding FR-type domain maps to 44–156 (NEKYLLRLLD…RGPSGLLTYT (113 aa)). FAD-binding positions include 136–166 (DSLK…IQPN) and 175–210 (VAKK…QCFL).

It belongs to the flavoprotein pyridine nucleotide cytochrome reductase family. The cofactor is FAD. Widely expressed.

The protein localises to the membrane. It catalyses the reaction 2 Fe(III)-[cytochrome b5] + NADH = 2 Fe(II)-[cytochrome b5] + NAD(+) + H(+). In terms of biological role, NADH-cytochrome b5 reductases are involved in desaturation and elongation of fatty acids, cholesterol biosynthesis, drug metabolism, and, in erythrocyte, methemoglobin reduction. This is NADH-cytochrome b5 reductase 1 (CYB5R1) from Homo sapiens (Human).